The following is a 151-amino-acid chain: Ribosomal RNA large subunit methyltransferase H (151 aa).

S-adenosyl-L-methionine contacts are provided by residues Gly-100 and 119–124 (LSKMTF).

The protein belongs to the RNA methyltransferase RlmH family. Homodimer.

It is found in the cytoplasm. It catalyses the reaction pseudouridine(1915) in 23S rRNA + S-adenosyl-L-methionine = N(3)-methylpseudouridine(1915) in 23S rRNA + S-adenosyl-L-homocysteine + H(+). Functionally, specifically methylates the pseudouridine at position 1915 (m3Psi1915) in 23S rRNA. This chain is Ribosomal RNA large subunit methyltransferase H, found in Thermotoga sp. (strain RQ2).